The primary structure comprises 873 residues: Mitogen-activated protein kinase kinase kinase kinase 3 (873 aa).

Met1 carries the post-translational modification N-acetylmethionine. In terms of domain architecture, Protein kinase spans 16–273 (FELIQRIGSG…AEKLLQHPFV (258 aa)). ATP-binding positions include 22-30 (IGSGTYGDV) and Lys45. Residue Asp136 is the Proton acceptor of the active site. 2 positions are modified to phosphoserine: Ser329 and Ser377. Residues 389-518 (AHLEDDEGDD…KPISNGLPPT (130 aa)) form a disordered region. A compositionally biased stretch (pro residues) spans 452-466 (HVPPRPPPPRLPPQK). Residues 487 to 499 (VHQQQSEQRGTNL) are compositionally biased toward polar residues. Residues 535-846 (PLKIHCATSW…IFRLLGSDRV (312 aa)) enclose the CNH domain.

It belongs to the protein kinase superfamily. STE Ser/Thr protein kinase family. STE20 subfamily. In terms of assembly, interacts with SH3GL2. Interaction appears to regulate MAP4K3-mediated JNK activation. Mg(2+) is required as a cofactor.

The enzyme catalyses L-seryl-[protein] + ATP = O-phospho-L-seryl-[protein] + ADP + H(+). It carries out the reaction L-threonyl-[protein] + ATP = O-phospho-L-threonyl-[protein] + ADP + H(+). Functionally, serine/threonine kinase that plays a role in the response to environmental stress. Appears to act upstream of the JUN N-terminal pathway. Activator of the Hippo signaling pathway which plays a pivotal role in organ size control and tumor suppression by restricting proliferation and promoting apoptosis. MAP4Ks act in parallel to and are partially redundant with STK3/MST2 and STK4/MST2 in the phosphorylation and activation of LATS1/2, and establish MAP4Ks as components of the expanded Hippo pathway. In Rattus norvegicus (Rat), this protein is Mitogen-activated protein kinase kinase kinase kinase 3 (Map4k3).